The chain runs to 477 residues: Aspartyl/glutamyl-tRNA(Asn/Gln) amidotransferase subunit B (477 aa).

Belongs to the GatB/GatE family. GatB subfamily. As to quaternary structure, heterotrimer of A, B and C subunits.

The catalysed reaction is L-glutamyl-tRNA(Gln) + L-glutamine + ATP + H2O = L-glutaminyl-tRNA(Gln) + L-glutamate + ADP + phosphate + H(+). It catalyses the reaction L-aspartyl-tRNA(Asn) + L-glutamine + ATP + H2O = L-asparaginyl-tRNA(Asn) + L-glutamate + ADP + phosphate + 2 H(+). In terms of biological role, allows the formation of correctly charged Asn-tRNA(Asn) or Gln-tRNA(Gln) through the transamidation of misacylated Asp-tRNA(Asn) or Glu-tRNA(Gln) in organisms which lack either or both of asparaginyl-tRNA or glutaminyl-tRNA synthetases. The reaction takes place in the presence of glutamine and ATP through an activated phospho-Asp-tRNA(Asn) or phospho-Glu-tRNA(Gln). The chain is Aspartyl/glutamyl-tRNA(Asn/Gln) amidotransferase subunit B from Nitrosococcus oceani (strain ATCC 19707 / BCRC 17464 / JCM 30415 / NCIMB 11848 / C-107).